The sequence spans 166 residues: Interferon gamma (166 aa).

The N-terminal stretch at 1–23 is a signal peptide; that stretch reads MKYTSYFLALLLCVLLGFSGSYG. Pyrrolidone carboxylic acid is present on Q24. N-linked (GlcNAc...) asparagine glycosylation is found at N39 and N106.

The protein belongs to the type II (or gamma) interferon family. In terms of assembly, homodimer. Interacts with IFNGR1 (via extracellular domain); this interaction promotes IFNGR1 dimerization. Released primarily from activated T lymphocytes.

Its subcellular location is the secreted. In terms of biological role, type II interferon produced by immune cells such as T-cells and NK cells that plays crucial roles in antimicrobial, antiviral, and antitumor responses by activating effector immune cells and enhancing antigen presentation. Primarily signals through the JAK-STAT pathway after interaction with its receptor IFNGR1 to affect gene regulation. Upon IFNG binding, IFNGR1 intracellular domain opens out to allow association of downstream signaling components JAK2, JAK1 and STAT1, leading to STAT1 activation, nuclear translocation and transcription of IFNG-regulated genes. Many of the induced genes are transcription factors such as IRF1 that are able to further drive regulation of a next wave of transcription. Plays a role in class I antigen presentation pathway by inducing a replacement of catalytic proteasome subunits with immunoproteasome subunits. In turn, increases the quantity, quality, and repertoire of peptides for class I MHC loading. Increases the efficiency of peptide generation also by inducing the expression of activator PA28 that associates with the proteasome and alters its proteolytic cleavage preference. Up-regulates as well MHC II complexes on the cell surface by promoting expression of several key molecules such as cathepsins B/CTSB, H/CTSH, and L/CTSL. Participates in the regulation of hematopoietic stem cells during development and under homeostatic conditions by affecting their development, quiescence, and differentiation. The polypeptide is Interferon gamma (IFNG) (Bubalus bubalis (Domestic water buffalo)).